A 267-amino-acid polypeptide reads, in one-letter code: 2-keto-3-deoxy-L-rhamnonate aldolase (267 aa).

Residue histidine 49 is the Proton acceptor of the active site. Residue glutamine 151 participates in substrate binding. Glutamate 153 is a Mg(2+) binding site. 2 residues coordinate substrate: alanine 178 and aspartate 179. Aspartate 179 provides a ligand contact to Mg(2+).

The protein belongs to the HpcH/HpaI aldolase family. KDR aldolase subfamily. Homohexamer. Mg(2+) serves as cofactor.

It catalyses the reaction 2-dehydro-3-deoxy-L-rhamnonate = (S)-lactaldehyde + pyruvate. Its function is as follows. Catalyzes the reversible retro-aldol cleavage of 2-keto-3-deoxy-L-rhamnonate (KDR) to pyruvate and lactaldehyde. The polypeptide is 2-keto-3-deoxy-L-rhamnonate aldolase (Escherichia coli (strain UTI89 / UPEC)).